Reading from the N-terminus, the 277-residue chain is Caspase-3 (277 aa).

Met-1 carries the N-acetylmethionine modification. Propeptides lie at residues 1-9 (MENTENSVD) and 10-28 (SKSIKNLEPKIIHGSESMD). Lys-11 bears the N6-acetyllysine mark. At Ser-26 the chain carries Phosphoserine. Catalysis depends on residues His-121 and Cys-163. An S-nitrosocysteine; in inhibited form modification is found at Cys-163. Position 207 is a (Microbial infection) ADP-riboxanated arginine (Arg-207).

It belongs to the peptidase C14A family. In terms of assembly, heterotetramer that consists of two anti-parallel arranged heterodimers, each one formed by a 17 kDa (p17) and a 12 kDa (p12) subunit. Interacts with BIRC6/bruce. In terms of processing, cleavage by granzyme B, caspase-6, caspase-8 and caspase-10 generates the two active subunits. Additional processing of the propeptides is likely due to the autocatalytic activity of the activated protease. Active heterodimers between the small subunit of caspase-7 protease and the large subunit of caspase-3 also occur and vice versa. Post-translationally, S-nitrosylated on its catalytic site cysteine in unstimulated human cell lines and denitrosylated upon activation of the Fas apoptotic pathway, associated with an increase in intracellular caspase activity. Fas therefore activates caspase-3 not only by inducing the cleavage of the caspase zymogen to its active subunits, but also by stimulating the denitrosylation of its active site thiol. Ubiquitinated by BIRC6; this activity is inhibited by DIABLO/SMAC. In terms of processing, (Microbial infection) ADP-riboxanation by C.violaceum CopC blocks CASP3 processing, preventing CASP3 activation and ability to recognize and cleave substrates. As to expression, highly expressed in lung, spleen, heart, liver and kidney. Moderate levels in brain and skeletal muscle, and low in testis. Also found in many cell lines, highest expression in cells of the immune system.

The protein resides in the cytoplasm. The enzyme catalyses Strict requirement for an Asp residue at positions P1 and P4. It has a preferred cleavage sequence of Asp-Xaa-Xaa-Asp-|- with a hydrophobic amino-acid residue at P2 and a hydrophilic amino-acid residue at P3, although Val or Ala are also accepted at this position.. With respect to regulation, inhibited by isatin sulfonamides. Inhibited by BIRC6; following inhibition of BIRC6-caspase binding by DIABLO/SMAC, BIRC6 is subjected to caspase cleavage, leading to an increase in active caspases. Thiol protease that acts as a major effector caspase involved in the execution phase of apoptosis. Following cleavage and activation by initiator caspases (CASP8, CASP9 and/or CASP10), mediates execution of apoptosis by catalyzing cleavage of many proteins. At the onset of apoptosis, it proteolytically cleaves poly(ADP-ribose) polymerase PARP1 at a '216-Asp-|-Gly-217' bond. Cleaves and activates sterol regulatory element binding proteins (SREBPs) between the basic helix-loop-helix leucine zipper domain and the membrane attachment domain. Cleaves and activates caspase-6, -7 and -9 (CASP6, CASP7 and CASP9, respectively). Cleaves and inactivates interleukin-18 (IL18). Involved in the cleavage of huntingtin. Triggers cell adhesion in sympathetic neurons through RET cleavage. Cleaves and inhibits serine/threonine-protein kinase AKT1 in response to oxidative stress. Acts as an inhibitor of type I interferon production during virus-induced apoptosis by mediating cleavage of antiviral proteins CGAS, IRF3 and MAVS, thereby preventing cytokine overproduction. Also involved in pyroptosis by mediating cleavage and activation of gasdermin-E (GSDME). Cleaves XRCC4 and phospholipid scramblase proteins XKR4, XKR8 and XKR9, leading to promote phosphatidylserine exposure on apoptotic cell surface. Cleaves BIRC6 following inhibition of BIRC6-caspase binding by DIABLO/SMAC. This Homo sapiens (Human) protein is Caspase-3 (CASP3).